The primary structure comprises 161 residues: Endoribonuclease YbeY (161 aa).

Zn(2+)-binding residues include histidine 127, histidine 131, and histidine 137.

It belongs to the endoribonuclease YbeY family. Zn(2+) serves as cofactor.

It is found in the cytoplasm. In terms of biological role, single strand-specific metallo-endoribonuclease involved in late-stage 70S ribosome quality control and in maturation of the 3' terminus of the 16S rRNA. This Listeria monocytogenes serotype 4a (strain HCC23) protein is Endoribonuclease YbeY.